The sequence spans 405 residues: Cytoplasmic tRNA 2-thiolation protein 2 (405 aa).

This sequence belongs to the CTU2/NCS2 family.

Its subcellular location is the cytoplasm. It functions in the pathway tRNA modification; 5-methoxycarbonylmethyl-2-thiouridine-tRNA biosynthesis. Its function is as follows. Plays a central role in 2-thiolation of mcm(5)S(2)U at tRNA wobble positions of tRNA(Lys), tRNA(Glu) and tRNA(Gln). May act by forming a heterodimer with NCS6/CTU1 that ligates sulfur from thiocarboxylated URM1 onto the uridine of tRNAs at wobble position. This is Cytoplasmic tRNA 2-thiolation protein 2 from Drosophila pseudoobscura pseudoobscura (Fruit fly).